Reading from the N-terminus, the 140-residue chain is Large ribosomal subunit protein uL14 (140 aa).

Belongs to the universal ribosomal protein uL14 family.

The chain is Large ribosomal subunit protein uL14 (RPL23) from Nicotiana tabacum (Common tobacco).